Consider the following 771-residue polypeptide: MEEDKLLSAVPEEGDATRDPGPEPEEEPGVRNGMASEGLNSSLCSPGHERRGTPADTEEPTKDPDVAFHGLSLGLSLTNGLALGPDLNILEDSAESRPWRAGVLAEGDNASRSLYPDAEDPQLGLDGPGEPDVRDGFSATFEKILESELLRGTQYSSLDSLDGLSLTDESDSCVSFEAPLTPLIQQRARDSPEPGAGLGIGDMAFEGDMGAAGGDGELGSPLRRSISSSRSENVLSRLSLMAMPNGFHEDGPQGPGGDEDDDEEDTDKLLNSASDPSLKDGLSDSDSELSSSEGLEPGSADPLANGCQGVSEAAHRLARRLYHLEGFQRCDVARQLGKNNEFSRLVAGEYLSFFDFSGLTLDGALRTFLKAFPLMGETQERERVLTHFSRRYCQCNPDDSTSEDGIHTLTCALMLLNTDLHGHNIGKKMSCQQFIANLDQLNDGQDFAKDLLKTLYNSIKNEKLEWAIDEDELRKSLSELVDDKFGTGTKKVTRILDGGNPFLDVPQALSATTYKHGVLTRKTHADMDGKRTPRGRRGWKKFYAVLKGTILYLQKDEYRPDKALSEGDLKNAIRVHHALATRASDYSKKSNVLKLKTADWRVFLFQAPSKEEMLSWILRINLVAAIFSAPAFPAAVSSMKKFCRPLLPSCTTRLCQEEQLRSHENKLRQLTAELAEHRCHPVERGIKSKEAEEYRLKEHYLTFEKSRYETYIHLLAMKIKVGSDDLERIEARLATLEGDDPSLRKTHSSPALSQGHVTGSKTTKDATGPDT.

Disordered stretches follow at residues 1–67 (MEED…PDVA) and 107–136 (GDNA…VRDG). Residues 47–66 (GHERRGTPADTEEPTKDPDV) are compositionally biased toward basic and acidic residues. Phosphoserine is present on serine 191. Disordered stretches follow at residues 207–230 (GDMG…SSSR) and 244–307 (PNGF…ANGC). Positions 218–230 (LGSPLRRSISSSR) are enriched in low complexity. Positions 257-266 (GDEDDDEEDT) are enriched in acidic residues. The region spanning 260-462 (DDDEEDTDKL…KTLYNSIKNE (203 aa)) is the SEC7 domain. Residues 288–299 (ELSSSEGLEPGS) are compositionally biased toward low complexity. The PH domain occupies 512-625 (TTYKHGVLTR…WILRINLVAA (114 aa)). The helical transmembrane segment at 622–639 (LVAAIFSAPAFPAAVSSM) threads the bilayer. The stretch at 651-680 (TTRLCQEEQLRSHENKLRQLTAELAEHRCH) forms a coiled coil. The tract at residues 739–771 (DDPSLRKTHSSPALSQGHVTGSKTTKDATGPDT) is disordered. Residues 748–761 (SSPALSQGHVTGSK) show a composition bias toward polar residues.

Belongs to the PSD family.

Its subcellular location is the cell membrane. It localises to the cell projection. The protein localises to the ruffle membrane. It is found in the cleavage furrow. This Homo sapiens (Human) protein is PH and SEC7 domain-containing protein 2 (PSD2).